An 8886-amino-acid chain; its full sequence is Obscurin (8886 aa).

4 consecutive Ig-like domains span residues 9 to 99 (PRFL…LRVD), 109 to 201 (PHFL…LVVD), 234 to 320 (PPSP…QTYS), and 329 to 415 (PTVP…AELS). Cys-30 and Cys-81 are oxidised to a cystine. Residues 135–165 (SPQPAVSWSKDGRRLGPPDAPHVRVEEHGES) form a disordered region. The segment covering 144–164 (KDGRRLGPPDAPHVRVEEHGE) has biased composition (basic and acidic residues). Cystine bridges form between Cys-257–Cys-309 and Cys-352–Cys-402. The residue at position 393 (Ser-393) is a Phosphoserine. A Fibronectin type-III 1 domain is found at 513–610 (PPADPVVKAK…FPGTMHLVPM (98 aa)). Ig-like domains are found at residues 702–793 (PSSK…QDIT), 859–951 (PKLV…VAEP), 951–1043 (PKLV…VAEP), 1043–1135 (PKMV…VTEP), 1135–1227 (PKLV…VAEP), 1227–1319 (PKLV…VTEP), 1319–1407 (PKLV…FRLD), 1411–1503 (PKLV…VAEP), 1503–1595 (PKLV…VAEP), 1595–1687 (PKLA…VAEP), 1687–1779 (PKLA…VAEP), 1779–1871 (PKLA…VAEP), 1871–1963 (PKLM…VAEP), 1963–2051 (PKLV…FRLD), 2055–2147 (TRLM…VAEA), 2152–2241 (PERP…EEVA), 2242–2325 (AKFS…ARLT), 2329–2415 (PRVV…AALR), 2420–2504 (PVLF…AKLN), 2598–2681 (PVSF…ASLR), 2721–2812 (PVTL…QSIT), 2900–2984 (PVVL…AEVT), 3078–3162 (PVVF…SKVS), 3258–3342 (PVDI…AKLC), 3348–3431 (NRFT…ARLL), 3527–3610 (PSIF…SSIV), 3616–3700 (PVRF…ATLT), 3785–3876 (ATLT…ATLT), 3881–3964 (PAKF…ATLT), 4042–4125 (PTKF…ATLS), 4130–4213 (PSRF…ATLS), 4219–4301 (PRFI…ATLN), 4307–4389 (PRFI…AVLT), 4395–4477 (PKFT…ATLS), 4483–4565 (PRFI…ATLS), 4571–4653 (PRFI…ATLS), 4659–4741 (PRFI…ATLS), 4746–4829 (PAKF…ATLS), 4833–4916 (PQVV…TSAT), 4923–5007 (PVRF…ARLS), 5013–5105 (PKFK…PEVT), 5378–5464 (LEVL…ARLS), and 5557–5659 (PQMV…TFNV). Intrachain disulfides connect Cys-885/Cys-935, Cys-977/Cys-1027, Cys-1069/Cys-1119, Cys-1161/Cys-1211, Cys-1253/Cys-1303, Cys-1345/Cys-1395, Cys-1437/Cys-1487, Cys-1529/Cys-1579, Cys-1621/Cys-1671, Cys-1713/Cys-1763, Cys-1805/Cys-1855, Cys-1897/Cys-1947, Cys-1989/Cys-2039, and Cys-2081/Cys-2131. Cys-2263 and Cys-2313 are disulfide-bonded. 8 disulfide bridges follow: Cys-2620–Cys-2669, Cys-2743–Cys-2793, Cys-2922–Cys-2972, Cys-3100–Cys-3150, Cys-3280–Cys-3330, Cys-3369–Cys-3419, Cys-3549–Cys-3599, and Cys-3638–Cys-3688. The residue at position 3321 (Ser-3321) is a Phosphoserine. At Ser-3802 the chain carries Phosphoserine. 14 disulfide bridges follow: Cys-3815-Cys-3864, Cys-3903-Cys-3952, Cys-4064-Cys-4113, Cys-4152-Cys-4201, Cys-4240-Cys-4289, Cys-4328-Cys-4377, Cys-4416-Cys-4465, Cys-4504-Cys-4553, Cys-4592-Cys-4641, Cys-4680-Cys-4729, Cys-4768-Cys-4817, Cys-4856-Cys-4906, Cys-4945-Cys-4995, and Cys-5034-Cys-5086. Phosphoserine is present on Ser-4960. One can recognise a Fibronectin type-III 2 domain in the interval 5471 to 5569 (PPEDAEVVGR…VKIAPAPAPA (99 aa)). The cysteines at positions 5590 and 5643 are disulfide-linked. Residue Ser-5699 is modified to Phosphoserine. Residues 5700–5736 (REPTLDSISELPEEDSRVQHLRQEAEETAPDLSEGYS) are disordered. Position 5703 is a phosphothreonine (Thr-5703). Position 5706 is a phosphoserine (Ser-5706). Positions 5713 to 5724 (EDSRVQHLRQEA) are enriched in basic and acidic residues. At Thr-5737 the chain carries Phosphothreonine. Ser-5754 bears the Phosphoserine mark. Residues 5821 to 5850 (LDKAAVKIQAAFKGYKVRKEMKQQEGPVFS) enclose the IQ domain. Residues 5847–5930 (PVFSRTFGDT…QVSTKSGRVS (84 aa)) enclose the Ig-like 48 domain. A disulfide bond links Cys-5868 and Cys-5920. The interval 5977–5996 (EEELFLSADEGPGEPEEPAD) is disordered. Ig-like domains are found at residues 6077–6166 (PVFL…AELR), 6209–6298 (PQVL…ARLL), and 6320–6416 (PRIL…LHIS). Residues Cys-6098 and Cys-6150 are joined by a disulfide bond. Residues 6504–6546 (KLQVPGGDSDEETKTPSASPRHGRSRPSSSVQESSSESEDGDS) form a disordered region. Residue Ser-6512 is modified to Phosphoserine. Thr-6518 bears the Phosphothreonine mark. The span at 6519–6538 (PSASPRHGRSRPSSSVQESS) shows a compositional bias: low complexity. Phosphoserine occurs at positions 6520 and 6522. Residues 6549–6616 (EIFDIYVVTA…SPAYLDKRLK (68 aa)) enclose the SH3 domain. In terms of domain architecture, DH spans 6642–6826 (RLSSVIQELL…SALPQRAENK (185 aa)). The PH domain maps to 6844-6953 (EPIRQGHFIV…WVKEICGIQQ (110 aa)). Residue Arg-6924 participates in a 1,2-diacyl-sn-glycero-3-phospho-(1D-myo-inositol-4,5-bisphosphate) binding. Position 6929 (Arg-6929) interacts with a 1,2-diacyl-sn-glycero-3-phospho-(1D-myo-inositol-3,4-bisphosphate). Ig-like domains lie at 6963 to 7046 (PEFE…GNAS) and 7057 to 7147 (PRFV…GELY). Disulfide bonds link Cys-6984/Cys-7036 and Cys-7078/Cys-7131. The disordered stretch occupies residues 7200–7257 (ALGPSPGDLPNTRQSEPPAFEEAASQIPGAASGTPEVSQPGTHKGLEQETTSSGSQGW). Polar residues predominate over residues 7247 to 7257 (QETTSSGSQGW). In terms of domain architecture, Ig-like 54 spans 7306–7394 (PSMQVTIEDV…GQVLCKAELL (89 aa)). The region spanning 7416–7669 (YDVQEEIGRG…TSQCLAHPWF (254 aa)) is the Protein kinase 1 domain. Residues 7422 to 7430 (IGRGVFGFV) and Lys-7445 contribute to the ATP site. Asp-7535 acts as the Proton acceptor in catalysis. 3 disordered regions span residues 7717–7810 (GPPD…SPGC), 7879–8106 (EQAS…TTRK), and 8150–8180 (SSEE…VPLR). Position 7779 is a phosphoserine (Ser-7779). The segment covering 7793 to 7804 (AAVPASPQSAGP) has biased composition (low complexity). A compositionally biased stretch (basic and acidic residues) spans 7941–7952 (TTAKDRGHKEGF). Positions 7986–7996 (SCHSELGSGSQ) are enriched in polar residues. 2 stretches are compositionally biased toward low complexity: residues 8000–8014 (GPPS…PPQS) and 8053–8073 (GSLS…ASQV). A Phosphoserine modification is found at Ser-8161. In terms of domain architecture, Ig-like 55 spans 8380 to 8464 (KGRDQELSDE…VSNPLGTAVT (85 aa)). Cys-8401 and Cys-8453 form a disulfide bridge. Residues 8474–8566 (PSSSPRPEVG…PSEQVLLGGP (93 aa)) form the Fibronectin type-III 3 domain. Residues 8590–8842 (FAFQMQIRRG…ASTCLQCGWL (253 aa)) enclose the Protein kinase 2 domain. Residues 8596–8604 (IRRGRFSVV) and Lys-8619 contribute to the ATP site. Asp-8709 serves as the catalytic Proton acceptor.

It belongs to the protein kinase superfamily. CAMK Ser/Thr protein kinase family. In terms of assembly, interacts (via protein kinase domain 1) with CDH2 and (via protein kinase domain 1) with ATP1B1. Isoform 2 is found in a complex with DSG2, DESM, GJA1, CDH2 and VCL. Isoform 3 is found in a complex with DSG2, DESM, GJA1, CDH2, ANK3 and VCL. It depends on Mg(2+) as a cofactor. In terms of processing, autophosphorylated by protein kinase domain 1 and 2. Two small isoforms, one probably containing protein kinase domain 2 and a partial protein kinase domain 1 and one containing only protein kinase domain 2, are glycosylated. In terms of tissue distribution, expressed in skeletal muscles including flexor digitorum brevis (FDB), soleus and tibialis anterior muscles, and to a lesser extent in heart muscles (at protein level). Isoform 2 and isoform 3 are expressed in the myocardium (at protein level).

Its subcellular location is the cytoplasm. The protein localises to the myofibril. It localises to the sarcomere. It is found in the m line. The protein resides in the z line. Its subcellular location is the cell membrane. The protein localises to the sarcolemma. It localises to the nucleus. It is found in the secreted. It carries out the reaction L-seryl-[protein] + ATP = O-phospho-L-seryl-[protein] + ADP + H(+). It catalyses the reaction L-threonyl-[protein] + ATP = O-phospho-L-threonyl-[protein] + ADP + H(+). Its function is as follows. Structural component of striated muscles which plays a role in myofibrillogenesis. Probably involved in the assembly of myosin into sarcomeric A bands in striated muscle. Has serine/threonine protein kinase activity and phosphorylates N-cadherin CDH2 and sodium/potassium-transporting ATPase subunit ATP1B1. Binds (via the PH domain) strongly to phosphatidylinositol 3,4-bisphosphate (PtdIns(3,4)P2) and phosphatidylinositol 4,5-bisphosphate (PtdIns(4,5)P2), and to a lesser extent to phosphatidylinositol 3-phosphate (PtdIns(3)P), phosphatidylinositol 4-phosphate (PtdIns(4)P), phosphatidylinositol 5-phosphate (PtdIns(5)P) and phosphatidylinositol 3,4,5-trisphosphate (PtdIns(3,4,5)P3). In terms of biological role, isoform 2 and isoform 3: bind phosphatidylinositol bisphosphates (PIP2s) via their PH domains and negatively regulate the PI3K/AKT/mTOR signaling pathway, thus contributing to the regulation of cardiomyocyte size and adhesion. The protein is Obscurin of Mus musculus (Mouse).